We begin with the raw amino-acid sequence, 69 residues long: DNA gyrase inhibitor YacG (69 aa).

Positions 1 to 28 (MSGEGKKHGSNVEPLRPTRPCPECGRPS) are disordered. Zn(2+)-binding residues include Cys-21, Cys-24, Cys-36, and Cys-40.

This sequence belongs to the DNA gyrase inhibitor YacG family. In terms of assembly, interacts with GyrB. Zn(2+) is required as a cofactor.

Its function is as follows. Inhibits all the catalytic activities of DNA gyrase by preventing its interaction with DNA. Acts by binding directly to the C-terminal domain of GyrB, which probably disrupts DNA binding by the gyrase. In Sinorhizobium fredii (strain NBRC 101917 / NGR234), this protein is DNA gyrase inhibitor YacG.